An 834-amino-acid chain; its full sequence is Sodium/hydrogen exchanger 3 (834 aa).

The first 25 residues, 1-25 (MWGLGARGPDRGLLLALALGGLARA), serve as a signal peptide directing secretion. Residues 26 to 51 (GGVEVEPGGAHGESGGFQVVTFEWAH) lie on the Extracellular side of the membrane. Residues 52–74 (VQDPYVIALWILVASLAKIGFHL) traverse the membrane as a helical segment. The Cytoplasmic portion of the chain corresponds to 75–82 (SHKVTSVV). The chain crosses the membrane as a helical span at residues 83–102 (PESALLIVLGLVLGGIVWAA). At 103–111 (DHIASFTLT) the chain is on the extracellular side. A helical transmembrane segment spans residues 112–129 (PTVFFFYLLPPIVLDAGY). The Cytoplasmic segment spans residues 130 to 132 (FMP). A helical membrane pass occupies residues 133 to 168 (NRLFFGNLGTILLYAVVGTVWNAATTGLSLYGVFLS). A 1,2-diacyl-sn-glycero-3-phospho-(1D-myo-inositol) is bound by residues G138, G141, and T142. The Extracellular portion of the chain corresponds to 169 to 181 (GLMGDLQIGLLDF). The chain crosses the membrane as a helical span at residues 182 to 203 (LLFGSLMAAVDPVAVLAVFEEV). Topologically, residues 204–205 (HV) are cytoplasmic. A helical transmembrane segment spans residues 206–237 (NEVLFIIVFGESLLNDAVTVVLYNVFESFVAL). Residues 238–244 (GGDNVTG) lie on the Extracellular side of the membrane. N241 carries N-linked (GlcNAc...) asparagine glycosylation. The helical transmembrane segment at 245-279 (VDCVKGIVSFFVVSLGGTLVGVVFAFLLSLVTRFT) threads the bilayer. Residues 280–281 (KH) lie on the Cytoplasmic side of the membrane. Residues 282 to 304 (VRIIEPGFVFIISYLSYLTSEML) form a helical membrane-spanning segment. Residues 305–306 (SL) are Extracellular-facing. The helical transmembrane segment at 307–323 (SAILAITFCGICCQKYV) threads the bilayer. Over 324–330 (KANISEQ) the chain is Cytoplasmic. Residues 331-359 (SATTVRYTMKMLASSAETIIFMFLGISAV) traverse the membrane as a helical segment. The Extracellular portion of the chain corresponds to 360-367 (NPFIWTWN). Residues 368–389 (TAFVLLTLVFISVYRAIGVVLQ) traverse the membrane as a helical segment. At 390–402 (TWLLNRYRMVQLE) the chain is on the cytoplasmic side. M398 contributes to the a 1,2-diacyl-sn-glycero-3-phospho-(1D-myo-inositol) binding site. The chain crosses the membrane as a helical span at residues 403 to 426 (PIDQVVLSYGGLRGAVAFALVVLL). At 427-433 (DGDKVKE) the chain is on the extracellular side. The helical transmembrane segment at 434-467 (KNLFVSTTIIVVFFTVIFQGLTIKPLVQWLKVKR) threads the bilayer. At 468 to 834 (SEHREPRLNE…PAALPESTHM (367 aa)) the chain is on the cytoplasmic side. A 1,2-diacyl-sn-glycero-3-phospho-(1D-myo-inositol)-binding residues include Q497, I498, and H500. S555 and S563 each carry phosphoserine. Positions 575 to 589 (RSSTVEASVSYLLRE) are interaction with EZR. The segment at 590–667 (NVSAVCLDMQ…RKRLESFKST (78 aa)) is interaction with NHERF4. Positions 591–695 (VSAVCLDMQS…AQKRRNSSIP (105 aa)) are interaction with AHCYL1. Phosphoserine is present on residues S592 and S607. S663 bears the Phosphoserine; by SGK1 mark. Basic residues predominate over residues 679–691 (KLYKRERAQKRRN). Positions 679–728 (KLYKRERAQKRRNSSIPNGKLPMESPAQNFTIKEKDLELSDTEEPPNYDE) are disordered. Residues 717–728 (LSDTEEPPNYDE) show a composition bias toward acidic residues. A phosphoserine mark is found at S718, S810, and S813. Positions 814–834 (FLQADGPEERPPAALPESTHM) are disordered.

This sequence belongs to the monovalent cation:proton antiporter 1 (CPA1) transporter (TC 2.A.36) family. In terms of assembly, homodimer. Found in the forms of complex and dynamic macromolecular complexes. Binds NHERF1 and NHERF2. Interacts with CHP1; increases SLC9A3 trafficking and activity at the plasma membrane. Interacts with CHP2 and SHANK2. Interacts with PDZK1 (via C-terminal PDZ domain). Interacts with NHERF4 and interaction decrease in response to elevated calcium ion levels. Interacts with AHCYL1; the interaction is required for SLC9A3 activity. Interacts with SNX27 (via PDZ domains); directs SLC9A3 membrane insertion from early endosomes to the plasma membrane. Interacts with EZR; interaction targets SLC9A3 to the apical membrane. Phosphorylated by PKA, which inhibits activity. Phosphorylation at Ser-663 by SGK1 is associated with increased abundance at the cell membrane. Phosphorylation at Ser-718 by CSNK2A1 regulates SLC9A3 activity through the formation of multiple signaling complexes.

The protein resides in the apical cell membrane. It localises to the cell membrane. The protein localises to the recycling endosome membrane. It is found in the early endosome membrane. It carries out the reaction Na(+)(in) + H(+)(out) = Na(+)(out) + H(+)(in). Seems to switch between active and inactive modes in response to various stimuli. Activated directly or indirectly by membrane phosphatidylinositol (PIs). Regulated by a variety of auxiliary proteins, which facilitate the maturation, cell surface expression and function of the transporter. Inhibited specifically by the drug tenapanor. In terms of biological role, plasma membrane Na(+)/H(+) antiporter. Exchanges intracellular H(+) ions for extracellular Na(+) in 1:1 stoichiometry, playing a key role in salt and fluid absorption and pH homeostasis. Major apical Na(+)/H(+) exchanger in kidney and intestine playing an important role in renal and intestine Na(+) absorption and blood pressure regulation. The protein is Sodium/hydrogen exchanger 3 of Homo sapiens (Human).